A 469-amino-acid polypeptide reads, in one-letter code: Glutamate--tRNA ligase (469 aa).

Residues P9 to G19 carry the 'HIGH' region motif. A 'KMSKS' region motif is present at residues K236–R240. ATP is bound at residue K239.

This sequence belongs to the class-I aminoacyl-tRNA synthetase family. Glutamate--tRNA ligase type 1 subfamily. In terms of assembly, monomer.

It localises to the cytoplasm. The enzyme catalyses tRNA(Glu) + L-glutamate + ATP = L-glutamyl-tRNA(Glu) + AMP + diphosphate. Its function is as follows. Catalyzes the attachment of glutamate to tRNA(Glu) in a two-step reaction: glutamate is first activated by ATP to form Glu-AMP and then transferred to the acceptor end of tRNA(Glu). The chain is Glutamate--tRNA ligase from Shewanella amazonensis (strain ATCC BAA-1098 / SB2B).